The chain runs to 177 residues: Translation initiation factor IF-3 (177 aa).

It belongs to the IF-3 family. As to quaternary structure, monomer.

It localises to the cytoplasm. IF-3 binds to the 30S ribosomal subunit and shifts the equilibrium between 70S ribosomes and their 50S and 30S subunits in favor of the free subunits, thus enhancing the availability of 30S subunits on which protein synthesis initiation begins. In Acaryochloris marina (strain MBIC 11017), this protein is Translation initiation factor IF-3.